A 365-amino-acid chain; its full sequence is Neuronal migration protein doublecortin (365 aa).

The interval 11–31 is disordered; the sequence is RDKTSRNMRGSRMNGLPSPTH. The residue at position 14 (threonine 14) is a Phosphothreonine; by PKC. Serine 28 is modified (phosphoserine; by CDK5). Serine 47 carries the phosphoserine; by MARK1 and PKA modification. Doublecortin domains follow at residues 53–139 and 180–263; these read KKVR…VEYT and KLVT…AQDD. Residue tyrosine 70 is modified to Phosphotyrosine; by ABL. Serine 74 is subject to Phosphoserine; by PKC. Serine 90 carries the phosphoserine; by CK2 modification. A Phosphoserine; by PKC modification is found at serine 110. Serine 115 is subject to Phosphoserine; by CK2, MARK1 and PKA. Phosphoserine; by CK2 is present on serine 265. Positions 275–365 are disordered; the sequence is KGNPSATAGP…DDSDSLGDSM (91 aa). Serine 287 is subject to Phosphoserine; by CDK5. A Phosphothreonine; by CDK5 modification is found at threonine 289. Serine 294 is modified (phosphoserine; by PKC). Phosphoserine; by CDK5 is present on serine 297. Residue serine 306 is modified to Phosphoserine; by CK2. Serine 306 carries the post-translational modification Phosphoserine; by DYRK2. The span at 307–341 shows a compositional bias: polar residues; sequence PADSGNDQDANGTSSSQLSTPKSKQSPISTPTSPG. Position 326 is a phosphothreonine; by CDK5 (threonine 326). Phosphothreonine; by PKC and MAPK is present on threonine 326. Serine 332 is modified (phosphoserine; by CDK5). Phosphoserine; by MAPK is present on serine 332. Position 336 is a phosphothreonine; by MAPK (threonine 336). Position 339 is a phosphoserine; by CDK5 (serine 339). Position 339 is a phosphoserine; by MAPK (serine 339). A Phosphoserine; by PKC modification is found at serine 342. Phosphoserine; by CK2 is present on residues serine 354 and serine 360. The segment covering 356–365 has biased composition (acidic residues); sequence DDSDSLGDSM.

In terms of assembly, interacts with tubulin. Interacts with USP9X. In terms of processing, phosphorylation by MARK1, MARK2 and PKA regulates its ability to bind microtubules. Phosphorylation at Ser-265 and Ser-297 seems to occur only in neonatal brain, the levels falling precipitously by postnatal day 21. Ubiquitinated by MDM2, leading to its degradation by the proteasome. Ubiquitinated by MDM2 and subsequent degradation leads to reduce the dendritic spine density of olfactory bulb granule cells. Highly expressed in neuronal cells of fetal brain (in the majority of cells of the cortical plate, intermediate zone and ventricular zone), but not expressed in other fetal tissues. In the adult, highly expressed in the brain frontal lobe, but very low expression in other regions of brain, and not detected in heart, placenta, lung, liver, skeletal muscles, kidney and pancreas.

The protein localises to the cytoplasm. The protein resides in the cell projection. Its subcellular location is the neuron projection. In terms of biological role, microtubule-associated protein required for initial steps of neuronal dispersion and cortex lamination during cerebral cortex development. May act by competing with the putative neuronal protein kinase DCLK1 in binding to a target protein. May in that way participate in a signaling pathway that is crucial for neuronal interaction before and during migration, possibly as part of a calcium ion-dependent signal transduction pathway. May be part with PAFAH1B1/LIS-1 of overlapping, but distinct, signaling pathways that promote neuronal migration. In Homo sapiens (Human), this protein is Neuronal migration protein doublecortin (DCX).